The sequence spans 511 residues: Cobyric acid synthase (511 aa).

Positions 251–443 constitute a GATase cobBQ-type domain; that stretch reads LLDIAIICLP…IHGIFDNDVF (193 aa). C332 acts as the Nucleophile in catalysis. Residue H435 is part of the active site.

This sequence belongs to the CobB/CobQ family. CobQ subfamily.

The protein operates within cofactor biosynthesis; adenosylcobalamin biosynthesis. Its function is as follows. Catalyzes amidations at positions B, D, E, and G on adenosylcobyrinic A,C-diamide. NH(2) groups are provided by glutamine, and one molecule of ATP is hydrogenolyzed for each amidation. In Listeria monocytogenes serotype 4b (strain F2365), this protein is Cobyric acid synthase.